The chain runs to 219 residues: Large ribosomal subunit protein uL4 (219 aa).

The interval 45–103 (ARRQGTHATKTRGQVRGGGRKPYRQKGTGRARQGSIRAPQFTGGGTVHGPQPRDYDQRT) is disordered. Residues 62–73 (GGRKPYRQKGTG) show a composition bias toward basic residues.

The protein belongs to the universal ribosomal protein uL4 family. In terms of assembly, part of the 50S ribosomal subunit.

One of the primary rRNA binding proteins, this protein initially binds near the 5'-end of the 23S rRNA. It is important during the early stages of 50S assembly. It makes multiple contacts with different domains of the 23S rRNA in the assembled 50S subunit and ribosome. Functionally, forms part of the polypeptide exit tunnel. This Corynebacterium kroppenstedtii (strain DSM 44385 / JCM 11950 / CIP 105744 / CCUG 35717) protein is Large ribosomal subunit protein uL4.